The following is a 281-amino-acid chain: Ribosomal protein L11 methyltransferase (281 aa).

The S-adenosyl-L-methionine site is built by Thr-133, Gly-154, Asp-175, and Asn-216.

Belongs to the methyltransferase superfamily. PrmA family.

The protein resides in the cytoplasm. The enzyme catalyses L-lysyl-[protein] + 3 S-adenosyl-L-methionine = N(6),N(6),N(6)-trimethyl-L-lysyl-[protein] + 3 S-adenosyl-L-homocysteine + 3 H(+). Methylates ribosomal protein L11. The sequence is that of Ribosomal protein L11 methyltransferase from Campylobacter jejuni subsp. jejuni serotype O:6 (strain 81116 / NCTC 11828).